A 32-amino-acid chain; its full sequence is Alpha-conotoxin RgIA (32 aa).

The propeptide occupies 1–19 (SNKRKNAAMLDMIAQHAIR). 2 disulfide bridges follow: cysteine 21–cysteine 27 and cysteine 22–cysteine 31.

This sequence belongs to the conotoxin A superfamily. In terms of processing, the disulfide bond CysI-CysIII is important for alpha-9-alpha-10 subtype inhibition, whereas the bond CysII-CysIV contributes to GABA(B) modulation. Expressed by the venom duct.

The protein localises to the secreted. In terms of biological role, this toxin target two types of receptors, the nicotinic acetylcholine receptor (nAChR) and the G-protein-coupled receptor GABA(B). It specifically inhibits the alpha-9-alpha-10/CHRNA9-CHRNA10 nAChR, with preference for rat receptors. It interacts with the alpha-10(+)/alpha-9(-)interface of the receptor. It shows a two order of magnitude species difference potency for the rat versus human alpha-9-alpha-10 nAChR, due to the Thr-86 located in the alpha-9 nAChR subunit. This toxin also shows inhibition of high voltage-activated (HVA) calcium channels (Cav2.2) by acting on GABA(B) receptors (GABBR1 and GABBR2). In vivo, this toxin produces an acute antinociceptive effect in peripheral nerve-injured rats, which may be related to the inhibition of immune cell buildup at the site of nerve injury. In addition, when intramuscularly injected into rats following chronic constriction injury of the sciatic nerve, this toxin protects peripheral nervous tissues as well as prevents central maladaptive plasticity by inhibiting glial cell activation. This Conus regius (Crown cone) protein is Alpha-conotoxin RgIA.